The chain runs to 677 residues: Zinc finger CCCH domain-containing protein 23 (677 aa).

Positions 66–117 are disordered; that stretch reads PPQAASSSPTVPAAHSPFLLSRQNSGRCPAPSPSSWAQAQPFSRSNSMGNGG. A compositionally biased stretch (low complexity) spans 69–82; it reads AASSSPTVPAAHSP. Polar residues predominate over residues 98–113; the sequence is PSSWAQAQPFSRSNSM. The segment at 228 to 255 adopts a C3H1-type zinc-finger fold; sequence GFGWKPCLYYARGFCKNGSTCRFVHGGL. One can recognise an RRM domain in the interval 359–435; it reads RQIYLTFPAD…RVLVKPYKEK (77 aa). Positions 480–513 form a coiled coil; sequence ANELMLRRKLEEQQQAAELQQAIDLHSRRLIGLQ. The span at 535–562 shows a compositional bias: polar residues; the sequence is TPITNAFTSGQPGATTIVESPPSSTGQL. Positions 535–607 are disordered; that stretch reads TPITNAFTSG…EHNLPDSPFA (73 aa). The span at 589 to 601 shows a compositional bias: basic and acidic residues; sequence RNADSDQSGEHNL.

In Oryza sativa subsp. japonica (Rice), this protein is Zinc finger CCCH domain-containing protein 23.